A 142-amino-acid chain; its full sequence is Hemoglobin subunit alpha-1 (142 aa).

A Globin domain is found at 2–142; that stretch reads VLSADDKSNV…VSTVLTSKYR (141 aa). H59 is an O2 binding site. H88 is a heme b binding site.

It belongs to the globin family. Heterotetramer of two alpha chains and two beta chains. Red blood cells.

In terms of biological role, involved in oxygen transport from the lung to the various peripheral tissues. Hemopressin acts as an antagonist peptide of the cannabinoid receptor CNR1. Hemopressin-binding efficiently blocks cannabinoid receptor CNR1 and subsequent signaling. This Equus quagga burchellii (Burchell's zebra) protein is Hemoglobin subunit alpha-1 (HBA1).